The sequence spans 167 residues: Photosystem I assembly protein Ycf3 (167 aa).

TPR repeat units follow at residues 35-68 (AFTYYRDGMSAQSEGEYAEALQNYYEAMRLEIDP), 72-105 (SYILYNIGLIHTSNGEHAKAIEYYLQALERNPSL), and 120-153 (GEQAVEKEDLETSEAWFDQAADYWKQAIALAPNN).

Belongs to the Ycf3 family.

It localises to the plastid. The protein localises to the chloroplast thylakoid membrane. In terms of biological role, essential for the assembly of the photosystem I (PSI) complex. May act as a chaperone-like factor to guide the assembly of the PSI subunits. The sequence is that of Photosystem I assembly protein Ycf3 from Zygnema circumcarinatum (Green alga).